Reading from the N-terminus, the 167-residue chain is Translation initiation factor IF-3 (167 aa).

This sequence belongs to the IF-3 family. In terms of assembly, monomer.

It localises to the cytoplasm. Its function is as follows. IF-3 binds to the 30S ribosomal subunit and shifts the equilibrium between 70S ribosomes and their 50S and 30S subunits in favor of the free subunits, thus enhancing the availability of 30S subunits on which protein synthesis initiation begins. The polypeptide is Translation initiation factor IF-3 (Bacillus anthracis).